The primary structure comprises 396 residues: Cytochrome b (396 aa).

A run of 4 helical transmembrane segments spans residues 37–57 (FGSL…ILAM), 81–102 (WLMR…YAHI), 117–137 (WNVG…GYVL), and 182–202 (FFTF…IHIM). Positions 87 and 101 each coordinate heme b. Heme b is bound by residues histidine 186 and histidine 200. Histidine 205 serves as a coordination point for a ubiquinone. A run of 4 helical transmembrane segments spans residues 230 to 250 (FKDI…SLLP), 292 to 312 (LGGV…PFTH), 324 to 344 (LAQV…WLGG), and 351 to 371 (FILM…LIFP).

The protein belongs to the cytochrome b family. As to quaternary structure, the cytochrome bc1 complex contains 3 respiratory subunits (MT-CYB, CYC1 and UQCRFS1), 2 core proteins (UQCRC1 and UQCRC2) and probably 6 low-molecular weight proteins. The cofactor is heme b.

The protein localises to the mitochondrion inner membrane. Its function is as follows. Component of the ubiquinol-cytochrome c reductase complex (complex III or cytochrome b-c1 complex) that is part of the mitochondrial respiratory chain. The b-c1 complex mediates electron transfer from ubiquinol to cytochrome c. Contributes to the generation of a proton gradient across the mitochondrial membrane that is then used for ATP synthesis. The sequence is that of Cytochrome b (mt-cyb) from Lampetra fluviatilis (European river lamprey).